Consider the following 343-residue polypeptide: Heat-inducible transcription repressor HrcA (343 aa).

This sequence belongs to the HrcA family.

Functionally, negative regulator of class I heat shock genes (grpE-dnaK-dnaJ and groELS operons). Prevents heat-shock induction of these operons. This Lysinibacillus sphaericus (Bacillus sphaericus) protein is Heat-inducible transcription repressor HrcA.